The primary structure comprises 447 residues: Serine--tRNA ligase (447 aa).

L-serine is bound at residue 245–247; that stretch reads TAE. Residues 276–278 and V292 contribute to the ATP site; that span reads RKE. Position 299 (E299) interacts with L-serine. Residue 363 to 366 coordinates ATP; the sequence is ELAS. T398 contacts L-serine.

This sequence belongs to the class-II aminoacyl-tRNA synthetase family. Type-1 seryl-tRNA synthetase subfamily. In terms of assembly, homodimer. The tRNA molecule binds across the dimer.

Its subcellular location is the cytoplasm. It carries out the reaction tRNA(Ser) + L-serine + ATP = L-seryl-tRNA(Ser) + AMP + diphosphate + H(+). It catalyses the reaction tRNA(Sec) + L-serine + ATP = L-seryl-tRNA(Sec) + AMP + diphosphate + H(+). Its pathway is aminoacyl-tRNA biosynthesis; selenocysteinyl-tRNA(Sec) biosynthesis; L-seryl-tRNA(Sec) from L-serine and tRNA(Sec): step 1/1. In terms of biological role, catalyzes the attachment of serine to tRNA(Ser). Is also able to aminoacylate tRNA(Sec) with serine, to form the misacylated tRNA L-seryl-tRNA(Sec), which will be further converted into selenocysteinyl-tRNA(Sec). This Pyrobaculum neutrophilum (strain DSM 2338 / JCM 9278 / NBRC 100436 / V24Sta) (Thermoproteus neutrophilus) protein is Serine--tRNA ligase.